Reading from the N-terminus, the 416-residue chain is Formyl-CoA:oxalate CoA-transferase (416 aa).

Residues 17-18 (QS), R38, 72-75 (LNTK), 96-98 (NFH), H104, and 137-140 (KAYE) each bind CoA. D169 functions as the Nucleophile in the catalytic mechanism. Residue 248 to 250 (GGQ) coordinates substrate. 273-275 (QEQ) contributes to the CoA binding site.

This sequence belongs to the CoA-transferase III family. Frc subfamily. As to quaternary structure, homodimer.

It carries out the reaction formyl-CoA + oxalate = oxalyl-CoA + formate. It functions in the pathway metabolic intermediate degradation; oxalate degradation; CO(2) and formate from oxalate: step 1/2. In terms of biological role, involved in the catabolism of oxalate and in the adapatation to low pH via the induction of the oxalate-dependent acid tolerance response (ATR). Catalyzes the transfer of the CoA moiety from formyl-CoA to oxalate. This chain is Formyl-CoA:oxalate CoA-transferase, found in Escherichia coli (strain ATCC 8739 / DSM 1576 / NBRC 3972 / NCIMB 8545 / WDCM 00012 / Crooks).